The primary structure comprises 251 residues: POU class 2 homeobox associating factor 3 (251 aa).

The 23-residue stretch at 5 to 27 (PKVYQGVRVKITVKELLQQRRAH) folds into the OCA domain. The tract at residues 24-45 (RRAHQAASGGTRSGGSSVHLSD) is disordered. The span at 31–40 (SGGTRSGGSS) shows a compositional bias: low complexity.

This sequence belongs to the POU2AF family. Interacts with POU2F3 in a DNA-dependent manner; this interaction increases POU2F3 transactivation activity. As to expression, expressed in many cell types of epithelial, mesenchymal and hematopoietic origins. Expressed in tufs cells.

Its subcellular location is the cytoplasm. It localises to the nucleus. Functionally, transcriptional coactivator that specifically associates with POU2F3. This complex drives the development of tuft cells, a rare a rare chemosensory cells that coordinate immune and neural functions within mucosal epithelial tissues. The sequence is that of POU class 2 homeobox associating factor 3 from Homo sapiens (Human).